The following is a 97-amino-acid chain: Large ribosomal subunit protein uL23 (97 aa).

It belongs to the universal ribosomal protein uL23 family. In terms of assembly, part of the 50S ribosomal subunit. Contacts protein L29, and trigger factor when it is bound to the ribosome.

One of the early assembly proteins it binds 23S rRNA. One of the proteins that surrounds the polypeptide exit tunnel on the outside of the ribosome. Forms the main docking site for trigger factor binding to the ribosome. This Sinorhizobium medicae (strain WSM419) (Ensifer medicae) protein is Large ribosomal subunit protein uL23.